A 336-amino-acid chain; its full sequence is Large ribosomal subunit protein mL39 (336 aa).

Residues 60–126 (EKIEVKHVGK…TKSCEIKFLT (67 aa)) form the TGS domain. Lys-123 bears the N6-acetyllysine mark.

Belongs to the mitochondrion-specific ribosomal protein mL39 family. In terms of assembly, component of the mitochondrial ribosome large subunit (39S) which comprises a 16S rRNA and about 50 distinct proteins.

It is found in the mitochondrion. The chain is Large ribosomal subunit protein mL39 (Mrpl39) from Mus musculus (Mouse).